The sequence spans 336 residues: Fructose-1,6-bisphosphatase class 1 (336 aa).

Mg(2+)-binding residues include glutamate 90, aspartate 112, leucine 114, and aspartate 115. Substrate contacts are provided by residues 115–118 (DGSS), asparagine 207, and lysine 273. Glutamate 279 provides a ligand contact to Mg(2+).

It belongs to the FBPase class 1 family. In terms of assembly, homotetramer. Mg(2+) serves as cofactor.

It localises to the cytoplasm. The enzyme catalyses beta-D-fructose 1,6-bisphosphate + H2O = beta-D-fructose 6-phosphate + phosphate. The protein operates within carbohydrate biosynthesis; gluconeogenesis. This chain is Fructose-1,6-bisphosphatase class 1, found in Xanthomonas axonopodis pv. citri (strain 306).